A 513-amino-acid chain; its full sequence is ATP synthase subunit alpha (513 aa).

169 to 176 (GDRQTGKT) serves as a coordination point for ATP.

It belongs to the ATPase alpha/beta chains family. In terms of assembly, F-type ATPases have 2 components, CF(1) - the catalytic core - and CF(0) - the membrane proton channel. CF(1) has five subunits: alpha(3), beta(3), gamma(1), delta(1), epsilon(1). CF(0) has three main subunits: a(1), b(2) and c(9-12). The alpha and beta chains form an alternating ring which encloses part of the gamma chain. CF(1) is attached to CF(0) by a central stalk formed by the gamma and epsilon chains, while a peripheral stalk is formed by the delta and b chains.

It localises to the cell inner membrane. It carries out the reaction ATP + H2O + 4 H(+)(in) = ADP + phosphate + 5 H(+)(out). In terms of biological role, produces ATP from ADP in the presence of a proton gradient across the membrane. The alpha chain is a regulatory subunit. The protein is ATP synthase subunit alpha of Salmonella paratyphi C (strain RKS4594).